The sequence spans 462 residues: DNA polymerase delta subunit 3 (462 aa).

A2 carries the N-acetylalanine modification. Disordered stretches follow at residues 144-186 (APAE…ASQQ), 200-230 (TKTQ…PGKG), 254-384 (AVKE…RVLK), and 403-462 (SESC…FQKK). Residues 156–174 (QSNLQAASEAQASELTTNG) show a composition bias toward polar residues. Basic and acidic residues predominate over residues 204-215 (DTNKETKPEARE). Residues 218 to 230 (SASSAGGKAPGKG) show a composition bias toward low complexity. A Glycyl lysine isopeptide (Lys-Gly) (interchain with G-Cter in SUMO); alternate cross-link involves residue K256. Residue K256 forms a Glycyl lysine isopeptide (Lys-Gly) (interchain with G-Cter in SUMO2); alternate linkage. Residue K259 forms a Glycyl lysine isopeptide (Lys-Gly) (interchain with G-Cter in SUMO2) linkage. Basic and acidic residues predominate over residues 284-305 (RKSEPGKVQQKEKSSRGKRVDL). Position 306 is a phosphoserine (S306). Residues 330–344 (SSEDEVFEDSPEMYE) show a composition bias toward acidic residues. Over residues 348–368 (PSPPPVSPPPDPMPKTEPPPV) the composition is skewed to pro residues. S403 and S405 each carry phosphoserine. T407 carries the phosphothreonine modification. S409 bears the Phosphoserine mark. Residues 416–427 (KPASAHKPPAAA) show a composition bias toward low complexity. Residues 428-437 (VKREPREERK) show a composition bias toward basic and acidic residues. K429 participates in a covalent cross-link: Glycyl lysine isopeptide (Lys-Gly) (interchain with G-Cter in SUMO); alternate. A Glycyl lysine isopeptide (Lys-Gly) (interchain with G-Cter in SUMO2); alternate cross-link involves residue K429. Polar residues predominate over residues 451 to 462 (RQVSITGFFQKK). The PIP-box signature appears at 452–459 (QVSITGFF). S454 is subject to Phosphoserine.

In terms of assembly, component of both the DNA polymerase delta and DNA polymerase zeta complexes. The tetrameric DNA polymerase delta complex (Pol-delta4), which consists of POLD1/p125, POLD2/p50, POLD3/p66/p68 and POLD4/p12, with POLD1 bearing DNA polymerase and 3' to 5' proofreading exonuclease activities. Within this complex, directly interacts with POLD2. Following stress caused by DNA damaging agents or by replication stress, POLD4 is degraded and Pol-delta4 is converted into a trimeric form of the complex (Pol-delta3), which consists of POLD1, POLD2 and POLD3. Pol-delta3 is the major form occurring at S phase replication sites, as well as DNA damage sites. Directly interacts with PCNA, as do POLD1 and POLD4; this interaction stimulates Pol-delta polymerase activity. POLD3 phosphorylation at Ser-454 impairs PCNA binding. Component of the DNA polymerase zeta complex (POLZ), which consists of REV3L, MAD2L2, POLD2 and POLD3, with REV3L bearing DNA polymerase catalytic activity. The DNA polymerase delta complex interacts with POLDIP2; this interaction is probably mediated through direct binding to POLD2. In terms of processing, ubiquitinated, but not targeted to the proteasome. Sumoylated. Sumoylation by SUMO3 may be predominant. Post-translationally, phosphorylation at Ser-454 is thought to decrease the affinity for PCNA and Pol-delta4 processivity. May be phosphorylated by CDK1-cyclin-A complex, as well as CDK2-cyclin-A and CDK2-cyclin-E complexes. PCNA interferes with CDK-cyclin phosphorylation.

It is found in the cytoplasm. It localises to the nucleus. Accessory component of both the DNA polymerase delta complex and the DNA polymerase zeta complex. As a component of the trimeric and tetrameric DNA polymerase delta complexes (Pol-delta3 and Pol-delta4, respectively), plays a role in high fidelity genome replication, including in lagging strand synthesis, and repair. Required for optimal Pol-delta activity. Stabilizes the Pol-delta complex and plays a major role in Pol-delta stimulation by PCNA. Pol-delta3 and Pol-delta4 are characterized by the absence or the presence of POLD4. They exhibit differences in catalytic activity. Most notably, Pol-delta3 shows higher proofreading activity than Pol-delta4. Although both Pol-delta3 and Pol-delta4 process Okazaki fragments in vitro, Pol-delta3 may also be better suited to fulfill this task, exhibiting near-absence of strand displacement activity compared to Pol-delta4 and stalling on encounter with the 5'-blocking oligonucleotides. Pol-delta3 idling process may avoid the formation of a gap, while maintaining a nick that can be readily ligated. Along with DNA polymerase kappa, DNA polymerase delta carries out approximately half of nucleotide excision repair (NER) synthesis following UV irradiation. In this context, POLD3, along with PCNA and RFC1-replication factor C complex, is required to recruit POLD1, the catalytic subunit of the polymerase delta complex, to DNA damage sites. Under conditions of DNA replication stress, required for the repair of broken replication forks through break-induced replication (BIR). Involved in the translesion synthesis (TLS) of templates carrying O6-methylguanine or abasic sites performed by Pol-delta4, independently of DNA polymerase zeta (REV3L) or eta (POLH). Facilitates abasic site bypass by DNA polymerase delta by promoting extension from the nucleotide inserted opposite the lesion. Also involved in TLS, as a component of the tetrameric DNA polymerase zeta complex. Along with POLD2, dramatically increases the efficiency and processivity of DNA synthesis of the DNA polymerase zeta complex compared to the minimal zeta complex, consisting of only REV3L and REV7. This chain is DNA polymerase delta subunit 3 (Pold3), found in Mus musculus (Mouse).